A 462-amino-acid polypeptide reads, in one-letter code: Keratin, type I cytoskeletal 28 (462 aa).

Residues 1 to 26 form a disordered region; that stretch reads MSLRFSGGSRHVGIQSGSLRPPSGGA. A head region spans residues 1–83; that stretch reads MSLRFSGGSR…GSEGGLLSGN (83 aa). A coil 1A region spans residues 84-119; that stretch reads EKVTMQNLNNRLASYLDNVKALEEANSELERKIKTW. The IF rod domain maps to 84-399; the sequence is EKVTMQNLNN…RLIDGDENSC (316 aa). Positions 120–141 are linker 1; that stretch reads HEKYGPGSCRGLDRDYSKYHLT. Residues 142 to 233 are coil 1B; the sequence is IEDLKSKIIS…KNHEEEMKVL (92 aa). Residues 234-256 are linker 12; the sequence is QCAAGGNVNVEMNAAPGVDLTVL. Residues 257 to 395 form a coil 2 region; that stretch reads LNNMRAEYEA…ETYCRLIDGD (139 aa). Positions 396 to 462 are tail; sequence ENSCSVSKGF…NGKAEQRVPF (67 aa).

It belongs to the intermediate filament family. In terms of assembly, heterotetramer of two type I and two type II keratins. As to expression, in the hair follicle and bulb, uniformly expressed in all three layers of the inner root sheath (the Henle layer, the Huxley layer and the cuticle) and observed in matrix cells (at protein level).

The protein localises to the cytoplasm. Essential for the proper assembly of types I and II keratin protein complexes and the formation of keratin intermediate filaments in the inner root sheath (irs). The polypeptide is Keratin, type I cytoskeletal 28 (Mus musculus (Mouse)).